Consider the following 512-residue polypeptide: Chlorogenic acid esterase (512 aa).

An N-terminal signal peptide occupies residues 1–18 (MLLRLCIIATLLVSHCVA). 3 N-linked (GlcNAc...) asparagine glycosylation sites follow: Asn47, Asn80, and Asn98. Cys92 and Cys120 form a disulfide bridge. The active-site Acyl-ester intermediate is Ser230. An N-linked (GlcNAc...) asparagine glycan is attached at Asn271. Residues Cys281 and Cys292 are joined by a disulfide bond. Asn295, Asn322, and Asn328 each carry an N-linked (GlcNAc...) asparagine glycan. The Charge relay system role is filled by Glu351. N-linked (GlcNAc...) asparagine glycosylation is found at Asn391 and Asn402. His416 (charge relay system) is an active-site residue. Asn474 is a glycosylation site (N-linked (GlcNAc...) asparagine).

The protein belongs to the type-B carboxylesterase/lipase family.

It is found in the secreted. The catalysed reaction is chlorogenate + H2O = L-quinate + (E)-caffeate + H(+). In terms of biological role, extracellular chlorogenic acid esterase that releases caffeic acid from chlorogenic acid (CGA) contained in natural substrates such as apple marc and coffee pulp. Shows no activity towards 5-O-p-coumaroyl quinic acid, another quinic ester derivative, and rosmarinic acid, another caffeic ester derivative. The sequence is that of Chlorogenic acid esterase from Aspergillus niger.